The chain runs to 98 residues: NADH-ubiquinone oxidoreductase chain 4L (98 aa).

Transmembrane regions (helical) follow at residues 1 to 21, 25 to 45, and 59 to 81; these read MSLA…GLLM, HLMS…VMAT, and MPII…LVMV.

This sequence belongs to the complex I subunit 4L family. In terms of assembly, core subunit of respiratory chain NADH dehydrogenase (Complex I) which is composed of 45 different subunits.

It localises to the mitochondrion inner membrane. The enzyme catalyses a ubiquinone + NADH + 5 H(+)(in) = a ubiquinol + NAD(+) + 4 H(+)(out). Its function is as follows. Core subunit of the mitochondrial membrane respiratory chain NADH dehydrogenase (Complex I) which catalyzes electron transfer from NADH through the respiratory chain, using ubiquinone as an electron acceptor. Part of the enzyme membrane arm which is embedded in the lipid bilayer and involved in proton translocation. The polypeptide is NADH-ubiquinone oxidoreductase chain 4L (MT-ND4L) (Equus asinus (Donkey)).